The chain runs to 310 residues: MGFRHKDIIALKDLTKEEITLLLDTADSLSEINRRDIKKVPTLRGKTVINLFYEASTRTRTSFEIAAKRLSADAVNITASTSSVVKGETLSDTANNLLAMKPDIIVMRHAVSGAHEYLAKRVSCSVINAGDGAHEHPSQGLLDMLTMRQKFGKLDGLKVAIIGDITHSRVARSDIYGLTTMGSHVFLAGPPTMMPVGIERLGNVTVCKDMREAVDKADVVMMLRIQLERQGKTLLPSMREYSRYFGLNPEVLGLAKKNAIVMHPGPINRGVELASSVADCDQSAILAQVENGVAVRMAMLYHVCGGEPVE.

Arginine 58 and threonine 59 together coordinate carbamoyl phosphate. An L-aspartate-binding site is contributed by lysine 86. Carbamoyl phosphate is bound by residues arginine 108, histidine 136, and glutamine 139. Residues arginine 169 and arginine 224 each coordinate L-aspartate. Carbamoyl phosphate-binding residues include glycine 265 and proline 266.

Belongs to the aspartate/ornithine carbamoyltransferase superfamily. ATCase family. In terms of assembly, heterododecamer (2C3:3R2) of six catalytic PyrB chains organized as two trimers (C3), and six regulatory PyrI chains organized as three dimers (R2).

It catalyses the reaction carbamoyl phosphate + L-aspartate = N-carbamoyl-L-aspartate + phosphate + H(+). The protein operates within pyrimidine metabolism; UMP biosynthesis via de novo pathway; (S)-dihydroorotate from bicarbonate: step 2/3. Functionally, catalyzes the condensation of carbamoyl phosphate and aspartate to form carbamoyl aspartate and inorganic phosphate, the committed step in the de novo pyrimidine nucleotide biosynthesis pathway. This is Aspartate carbamoyltransferase catalytic subunit from Geobacter sp. (strain M21).